A 691-amino-acid chain; its full sequence is NADPH--cytochrome P450 reductase (691 aa).

The Lumenal portion of the chain corresponds to 2 to 7 (PFGIDN). The chain crosses the membrane as a helical span at residues 8 to 24 (TDFTVLAGLVLAVLLYV). The Cytoplasmic portion of the chain corresponds to 25-691 (KRNSIKELLM…TSGRYQEDVW (667 aa)). A Flavodoxin-like domain is found at 61-204 (YLVLYASQTG…DYMAWKDSIL (144 aa)). FMN-binding positions include 67-72 (SQTGTA), lysine 78, 116-119 (STYG), 152-161 (LGNSTYEFFN), and aspartate 187. One can recognise an FAD-binding FR-type domain in the interval 266–529 (SQPYIAPIVK…HVRRSNFRLP (264 aa)). Arginine 285 provides a ligand contact to NADP(+). FAD-binding positions include 439–442 (RYYS), 457–459 (TSI), and 476–479 (GVTT). Residues threonine 543, 610-611 (SR), 617-621 (KVYVQ), and aspartate 646 each bind NADP(+). Residue lysine 666 forms a Glycyl lysine isopeptide (Lys-Gly) (interchain with G-Cter in ubiquitin) linkage. Tryptophan 691 is a binding site for FAD.

The protein belongs to the NADPH--cytochrome P450 reductase family. In the N-terminal section; belongs to the flavodoxin family. This sequence in the C-terminal section; belongs to the flavoprotein pyridine nucleotide cytochrome reductase family. As to quaternary structure, interacts with PCL1. FAD is required as a cofactor. The cofactor is FMN. Post-translationally, phosphorylated by the cyclin-CDK PCL1-PHO85.

Its subcellular location is the endoplasmic reticulum membrane. The protein localises to the mitochondrion outer membrane. The protein resides in the cell membrane. The enzyme catalyses 2 oxidized [cytochrome P450] + NADPH = 2 reduced [cytochrome P450] + NADP(+) + H(+). Its function is as follows. This enzyme is required for electron transfer from NADP to cytochrome P450 in microsomes. It can also provide electron transfer to heme oxygenase and cytochrome B5. Involved in ergosterol biosynthesis. Has NADPH-dependent ferrireductase activity on the plasma membrane. This chain is NADPH--cytochrome P450 reductase, found in Saccharomyces cerevisiae (strain ATCC 204508 / S288c) (Baker's yeast).